A 738-amino-acid chain; its full sequence is Catalase-peroxidase (738 aa).

A compositionally biased stretch (basic and acidic residues) spans 1–16 (MSENHDAIVTDAKTEE). The disordered stretch occupies residues 1–37 (MSENHDAIVTDAKTEEAGGCPVAHGRAPHPTQGGGNR). Residues 108–231 (WHSAGTYRIS…LGAVQMGLIY (124 aa)) constitute a cross-link (tryptophyl-tyrosyl-methioninium (Trp-Tyr) (with M-257)). The active-site Proton acceptor is the histidine 109. The tryptophyl-tyrosyl-methioninium (Tyr-Met) (with W-108) cross-link spans 231-257 (YVNPEGPNGNPDPIAAARDIRETFGRM). Residue histidine 272 participates in heme b binding.

This sequence belongs to the peroxidase family. Peroxidase/catalase subfamily. As to quaternary structure, homodimer or homotetramer. Heme b serves as cofactor. Formation of the three residue Trp-Tyr-Met cross-link is important for the catalase, but not the peroxidase activity of the enzyme.

It carries out the reaction H2O2 + AH2 = A + 2 H2O. It catalyses the reaction 2 H2O2 = O2 + 2 H2O. Bifunctional enzyme with both catalase and broad-spectrum peroxidase activity. This Streptomyces ambofaciens protein is Catalase-peroxidase.